A 556-amino-acid polypeptide reads, in one-letter code: MKRSRTQYAEEPEENDDFNPVYPFDPYDTAHVPFVTPPFTSSNAFQEKPPGVLSLNYKDPIVTENGSLTLKLGNGIKLNSQGQLTTTNTKVLEPLPHTSQGLTLSWSAPLSVKASALTLNTMAPFTTTNESLSLVTAPPITVEASQLGLASCSTSKLRGGGNLGFHLPAPFVVPSSNALTLSASDPLTVNSNSLGLNITSPITLINGSLALATSPPLDTTGSTLNLSVAAPLSVSQNALTVSTGNGLQVSGSQLVTRIGDGLRFDNGVIKAHVAGGNETLRGKIILDVNYPFDATTNLSLRRGSGLIYNESTNWNLTTDISTEKGLTFSGNQIAINAGPCGLTFNNRKLQVKLGAGHTFSSNDNIALNSIATPYDPLTLWTTPDPPPNCTLRQELDAKLTLCLTKNESIVNGIVSLIGVKGDLLHIQPTTTTVGLHLVFDRQGRLVTTTPTALVPQASWGYKQGQSVSSSAVANALGFMPNVSAYPRPNAGEAKSQMLSQTYLQGDTTKPITMKVVFNGNATVDGYSLTFMWTGVSNYLNQQFSTPSCSFSYIAQE.

Positions 1-22 (MKRSRTQYAEEPEENDDFNPVY) are disordered.

This sequence belongs to the adenoviridae fiber family. Homotrimer. Interacts with host receptor CXCAR. Interacts (via N-terminal tail region) with pentons.

It is found in the virion. Its subcellular location is the host nucleus. Functionally, forms spikes that protrude from each vertex of the icosahedral capsid. Interacts with host receptor CXCAR to provide virion initial attachment to target cell. Fiber proteins are shed during virus entry, when virus is still at the cell surface. The polypeptide is Fiber protein (Human adenovirus A serotype 31 (HAdV-31)).